The sequence spans 276 residues: Glutamate racemase (276 aa).

Residues 9–10 and 41–42 each bind substrate; these read DS and YG. The active-site Proton donor/acceptor is cysteine 72. 73–74 is a binding site for substrate; it reads NT. The Proton donor/acceptor role is filled by cysteine 183. 184-185 is a substrate binding site; it reads TH.

It belongs to the aspartate/glutamate racemases family.

It carries out the reaction L-glutamate = D-glutamate. It functions in the pathway cell wall biogenesis; peptidoglycan biosynthesis. Functionally, provides the (R)-glutamate required for cell wall biosynthesis. The sequence is that of Glutamate racemase from Shouchella clausii (strain KSM-K16) (Alkalihalobacillus clausii).